The following is a 432-amino-acid chain: MDARWWAVVVLAAFPSLGAGGETPEAPPESWTQLWFFRFVVNAAGYASFMVPGYLLVQYFRRKNYLETGRGLCFPLVKACVFGNEPKASDEVPLAPRTEAAETTPMWQALKLLFCATGLQVSYLTWGVLQERVMTRSYGATATSPGERFTDSQFLVLMNRVLALIVAGLSCVLCKQPRHGAPMYRYSFASLSNVLSSWCQYEALKFVSFPTQVLAKVSKVIPVMLMGKLVSRRSYEHWEYLTATLISIGVSMFLLSSGPEPRSSPATTLSGLILLAGYIAFDSFTSNWQDALFAYKMSSVQMMFGVNFFSCLFTVGSLLEQGALLEGTRFMGRHSEFAAHALLLSICSACGQLFIFYTIGQFGAAVFTIIMTLRQAFAILLSCLLYGHTVTVVGGLGVAVVFAALLLRVYARGRLKQRGKKAVPVESPVQKV.

Helical transmembrane passes span 5-25 (WWAV…ETPE), 40-60 (VVNA…VQYF), 109-129 (ALKL…WGVL), 154-174 (FLVL…CVLC), 238-258 (WEYL…LSSG), 265-285 (PATT…DSFT), 299-319 (SVQM…GSLL), 353-373 (LFIF…IMTL), and 387-407 (GHTV…ALLL). Ser427 is subject to Phosphoserine.

Belongs to the nucleotide-sugar transporter family. SLC35B subfamily.

The protein resides in the golgi apparatus membrane. It carries out the reaction 3'-phosphoadenylyl sulfate(in) + adenosine 3',5'-bisphosphate(out) = 3'-phosphoadenylyl sulfate(out) + adenosine 3',5'-bisphosphate(in). Its function is as follows. Probably functions as a 3'-phosphoadenylyl sulfate:adenosine 3',5'-bisphosphate antiporter at the Golgi membranes. Mediates the transport from the cytosol into the lumen of the Golgi of 3'-phosphoadenylyl sulfate/adenosine 3'-phospho 5'-phosphosulfate (PAPS), a universal sulfuryl donor for sulfation events that take place in that compartment. This chain is Adenosine 3'-phospho 5'-phosphosulfate transporter 1, found in Pongo abelii (Sumatran orangutan).